Consider the following 425-residue polypeptide: Glutamate-1-semialdehyde 2,1-aminomutase (425 aa).

Position 265 is an N6-(pyridoxal phosphate)lysine (Lys265).

Belongs to the class-III pyridoxal-phosphate-dependent aminotransferase family. HemL subfamily. Homodimer. It depends on pyridoxal 5'-phosphate as a cofactor.

Its subcellular location is the cytoplasm. It catalyses the reaction (S)-4-amino-5-oxopentanoate = 5-aminolevulinate. The protein operates within porphyrin-containing compound metabolism; protoporphyrin-IX biosynthesis; 5-aminolevulinate from L-glutamyl-tRNA(Glu): step 2/2. The sequence is that of Glutamate-1-semialdehyde 2,1-aminomutase from Clostridium perfringens (strain ATCC 13124 / DSM 756 / JCM 1290 / NCIMB 6125 / NCTC 8237 / Type A).